Here is a 109-residue protein sequence, read N- to C-terminus: MKLIVAVVQDQDSNRLLKTLTDHNFRVTKLATTGGFLKSGNTTFMIGVEDIRVNKALSLIKENGQKRDQMIAPVSPMGGNADSYVPYPVEVEVGGATVFVLPVDEFHQF.

Positions 21, 25, 28, 35, 36, 37, 41, 47, 92, and 94 each coordinate 3',3'-c-di-AMP.

As to quaternary structure, homotrimer.

The protein localises to the cytoplasm. In terms of biological role, binds cyclic di-AMP (c-di-AMP) and is probably involved in c-di-AMP-mediated signaling pathways. In vitro, can also bind cyclic GMP-AMP (3'3'-cGAMP), with lower affinity, but not c-di-GMP or 2'3'-cGAMP. This chain is Cyclic di-AMP receptor A, found in Bacillus subtilis (strain 168).